Here is a 397-residue protein sequence, read N- to C-terminus: Acetate kinase (397 aa).

Position 8 (asparagine 8) interacts with Mg(2+). Lysine 15 lines the ATP pocket. Residue arginine 90 participates in substrate binding. Catalysis depends on aspartate 147, which acts as the Proton donor/acceptor. Position 207-211 (207-211 (HLGAG)) interacts with ATP. Glutamate 382 is a binding site for Mg(2+).

Belongs to the acetokinase family. As to quaternary structure, homodimer. Requires Mg(2+) as cofactor. The cofactor is Mn(2+).

Its subcellular location is the cytoplasm. It catalyses the reaction acetate + ATP = acetyl phosphate + ADP. It functions in the pathway metabolic intermediate biosynthesis; acetyl-CoA biosynthesis; acetyl-CoA from acetate: step 1/2. Functionally, catalyzes the formation of acetyl phosphate from acetate and ATP. Can also catalyze the reverse reaction. The protein is Acetate kinase of Lactiplantibacillus plantarum (strain ATCC BAA-793 / NCIMB 8826 / WCFS1) (Lactobacillus plantarum).